A 369-amino-acid polypeptide reads, in one-letter code: S-(hydroxymethyl)glutathione dehydrogenase (369 aa).

Cysteine 40, histidine 62, cysteine 92, cysteine 95, cysteine 98, cysteine 106, and cysteine 169 together coordinate Zn(2+).

Belongs to the zinc-containing alcohol dehydrogenase family. Class-III subfamily. Homodimer. Zn(2+) is required as a cofactor.

Its subcellular location is the cytoplasm. It catalyses the reaction S-(hydroxymethyl)glutathione + NADP(+) = S-formylglutathione + NADPH + H(+). It carries out the reaction S-(hydroxymethyl)glutathione + NAD(+) = S-formylglutathione + NADH + H(+). The enzyme catalyses a primary alcohol + NAD(+) = an aldehyde + NADH + H(+). The catalysed reaction is a secondary alcohol + NAD(+) = a ketone + NADH + H(+). It catalyses the reaction S-nitrosoglutathione + NADH + H(+) = S-(hydroxysulfenamide)glutathione + NAD(+). Its function is as follows. Has high formaldehyde dehydrogenase activity in the presence of glutathione and catalyzes the oxidation of normal alcohols in a reaction that is not GSH-dependent. In addition, hemithiolacetals other than those formed from GSH, including omega-thiol fatty acids, also are substrates. Also acts as a S-nitroso-glutathione reductase by catalyzing the NADH-dependent reduction of S-nitrosoglutathione. The sequence is that of S-(hydroxymethyl)glutathione dehydrogenase (frmA) from Escherichia coli (strain SMS-3-5 / SECEC).